Consider the following 175-residue polypeptide: Large ribosomal subunit protein bL17 (175 aa).

The disordered stretch occupies residues 124–175 (VKKSKPTAPAQAVATKPAVEETREAAAAQPQEPEVEISEVKDPAEECEAKAD). Basic and acidic residues predominate over residues 161 to 175 (SEVKDPAEECEAKAD).

It belongs to the bacterial ribosomal protein bL17 family. In terms of assembly, part of the 50S ribosomal subunit. Contacts protein L32.

The polypeptide is Large ribosomal subunit protein bL17 (Geobacter sulfurreducens (strain ATCC 51573 / DSM 12127 / PCA)).